Consider the following 488-residue polypeptide: Capsid protein (488 aa).

Residues 80-93 (ISEDESDSGEEPEF) are compositionally biased toward acidic residues. The segment at 80–143 (ISEDESDSGE…QPKTIPGQKQ (64 aa)) is disordered. A compositionally biased stretch (basic and acidic residues) spans 94-109 (EQVRMDRTGGTEIPKE). The short motif at 121-124 (RKRK) is the Nuclear localization signal element. Polar residues predominate over residues 134 to 143 (QPKTIPGQKQ). The segment at 410–427 (CRCWICNIEGHYANECPN) adopts a CCHC-type zinc-finger fold. The segment at 463 to 488 (YKEEEEETSTEESDDESSTSEDSDSD) is disordered. Residues 464–488 (KEEEEETSTEESDDESSTSEDSDSD) show a composition bias toward acidic residues.

This sequence belongs to the caulimoviridae capsid protein family. In terms of assembly, interacts (via nuclear localization signal) with host importin alpha.

The protein resides in the virion. It is found in the host nucleus. In terms of biological role, self assembles to form an icosahedral capsid, about 50 nm in diameter, nm, composed of 420 subunits of the viral capsid protein. The capsid encapsulates the genomic dsDNA. Following virus entry into host cell, provides nuclear import of the viral genome. Virus particles do not enter the nucleus, but dock at the nuclear membrane through the interaction with host importins. The protein is Capsid protein of Arabidopsis thaliana (Mouse-ear cress).